A 100-amino-acid chain; its full sequence is Urease subunit gamma (100 aa).

This sequence belongs to the urease gamma subunit family. As to quaternary structure, heterotrimer of UreA (gamma), UreB (beta) and UreC (alpha) subunits. Three heterotrimers associate to form the active enzyme.

The protein resides in the cytoplasm. The catalysed reaction is urea + 2 H2O + H(+) = hydrogencarbonate + 2 NH4(+). It functions in the pathway nitrogen metabolism; urea degradation; CO(2) and NH(3) from urea (urease route): step 1/1. The sequence is that of Urease subunit gamma from Thermosynechococcus vestitus (strain NIES-2133 / IAM M-273 / BP-1).